The sequence spans 177 residues: Cell division protein ZapC (177 aa).

It belongs to the ZapC family. In terms of assembly, interacts directly with FtsZ.

The protein resides in the cytoplasm. Its function is as follows. Contributes to the efficiency of the cell division process by stabilizing the polymeric form of the cell division protein FtsZ. Acts by promoting interactions between FtsZ protofilaments and suppressing the GTPase activity of FtsZ. The chain is Cell division protein ZapC from Shewanella oneidensis (strain ATCC 700550 / JCM 31522 / CIP 106686 / LMG 19005 / NCIMB 14063 / MR-1).